Consider the following 178-residue polypeptide: MYFLFFFLLFLFPVGVKGVEEELRALEGEDVSFYGEERALAFFLLIGREDGKFQELCSGGNCSSCSAFAGRVRFKERQFTLSKVQVRETGTRFKVRSRHAKGNSTLLCYKLTVAKFRPVLVPVVLSGFSIGLSCVDHSNPWGFSAVFIWDMNHRGTTDGRGGITGGKKWVSALARAAF.

Positions 1–18 (MYFLFFFLLFLFPVGVKG) are cleaved as a signal peptide.

In Pantherophis guttatus (Corn snake), this protein is Protein 105R.